A 423-amino-acid chain; its full sequence is Dihydroorotase (423 aa).

2 residues coordinate Zn(2+): His60 and His62. Residues 62 to 64 (HFR) and Asn94 contribute to the substrate site. Asp152, His179, His232, and Asp305 together coordinate Zn(2+). Asp305 is an active-site residue. Substrate contacts are provided by residues His309 and 323 to 324 (PG).

The protein belongs to the metallo-dependent hydrolases superfamily. DHOase family. Class I DHOase subfamily. Requires Zn(2+) as cofactor.

It carries out the reaction (S)-dihydroorotate + H2O = N-carbamoyl-L-aspartate + H(+). It participates in pyrimidine metabolism; UMP biosynthesis via de novo pathway; (S)-dihydroorotate from bicarbonate: step 3/3. Functionally, catalyzes the reversible cyclization of carbamoyl aspartate to dihydroorotate. This is Dihydroorotase from Sulfurihydrogenibium sp. (strain YO3AOP1).